Here is a 295-residue protein sequence, read N- to C-terminus: Aspartate carbamoyltransferase catalytic subunit (295 aa).

Residues Arg49 and Thr50 each contribute to the carbamoyl phosphate site. Residue Lys77 coordinates L-aspartate. Residues Arg99, His127, and Gln130 each coordinate carbamoyl phosphate. The L-aspartate site is built by Arg161 and Arg212. Carbamoyl phosphate contacts are provided by Gly251 and Pro252.

Belongs to the aspartate/ornithine carbamoyltransferase superfamily. ATCase family. As to quaternary structure, heterododecamer (2C3:3R2) of six catalytic PyrB chains organized as two trimers (C3), and six regulatory PyrI chains organized as three dimers (R2).

The enzyme catalyses carbamoyl phosphate + L-aspartate = N-carbamoyl-L-aspartate + phosphate + H(+). It participates in pyrimidine metabolism; UMP biosynthesis via de novo pathway; (S)-dihydroorotate from bicarbonate: step 2/3. In terms of biological role, catalyzes the condensation of carbamoyl phosphate and aspartate to form carbamoyl aspartate and inorganic phosphate, the committed step in the de novo pyrimidine nucleotide biosynthesis pathway. This Campylobacter jejuni subsp. jejuni serotype O:6 (strain 81116 / NCTC 11828) protein is Aspartate carbamoyltransferase catalytic subunit.